Reading from the N-terminus, the 109-residue chain is Thiosulfate sulfurtransferase GlpE (109 aa).

Positions Lys-17–Thr-105 constitute a Rhodanese domain. Cys-65 (cysteine persulfide intermediate) is an active-site residue.

It belongs to the GlpE family.

The protein resides in the cytoplasm. It catalyses the reaction thiosulfate + hydrogen cyanide = thiocyanate + sulfite + 2 H(+). The enzyme catalyses thiosulfate + [thioredoxin]-dithiol = [thioredoxin]-disulfide + hydrogen sulfide + sulfite + 2 H(+). Its function is as follows. Transferase that catalyzes the transfer of sulfur from thiosulfate to thiophilic acceptors such as cyanide or dithiols. May function in a CysM-independent thiosulfate assimilation pathway by catalyzing the conversion of thiosulfate to sulfite, which can then be used for L-cysteine biosynthesis. This chain is Thiosulfate sulfurtransferase GlpE, found in Yersinia pestis bv. Antiqua (strain Antiqua).